The chain runs to 37 residues: Diptericin (37 aa).

Residues 1–37 (DLHIPPPDNKINWPQLSGGGGGSPKTGYDININAQQK) form a disordered region.

It belongs to the attacin/sarcotoxin-2 family. Synthesized by the fat body and secreted into the hemolymph.

The protein resides in the secreted. Functionally, acute phase protein with antibacterial activity against the Gram-negative bacteria E.coli (MIC=6.25 ug/ml) and S.sonnei (MIC=12.5 ug/ml). Lacks antibacterial activity against the Gram-negative bacteria P.vulgaris, P.rettgeri and P.aeruginosa, and against the Gram-positive bacteria B.subtilis, S.aureus, M.luteus, B.megaterium, C.bovis and E.cloacae. This Sarcophaga peregrina (Flesh fly) protein is Diptericin.